Here is a 232-residue protein sequence, read N- to C-terminus: Ribonuclease 3 (232 aa).

The RNase III domain maps to 6–135 (QDYLAKTYGI…FIGALYLDQG (130 aa)). Glu48 is a Mg(2+) binding site. Asp52 is an active-site residue. Mg(2+)-binding residues include Asp121 and Glu124. The active site involves Glu124. Residues 161–230 (DAKTSLQEFL…AKHALEKLRM (70 aa)) form the DRBM domain.

Belongs to the ribonuclease III family. In terms of assembly, homodimer. It depends on Mg(2+) as a cofactor.

It is found in the cytoplasm. It catalyses the reaction Endonucleolytic cleavage to 5'-phosphomonoester.. In terms of biological role, digests double-stranded RNA. Involved in the processing of primary rRNA transcript to yield the immediate precursors to the large and small rRNAs (23S and 16S). Processes some mRNAs, and tRNAs when they are encoded in the rRNA operon. Processes pre-crRNA and tracrRNA of type II CRISPR loci if present in the organism. In Limosilactobacillus fermentum (strain NBRC 3956 / LMG 18251) (Lactobacillus fermentum), this protein is Ribonuclease 3.